Here is a 145-residue protein sequence, read N- to C-terminus: UPF0201 protein STK_09490 (145 aa).

It belongs to the UPF0201 family.

This is UPF0201 protein STK_09490 from Sulfurisphaera tokodaii (strain DSM 16993 / JCM 10545 / NBRC 100140 / 7) (Sulfolobus tokodaii).